The primary structure comprises 171 residues: Ribosome maturation factor RimP (171 aa).

The protein belongs to the RimP family.

The protein resides in the cytoplasm. In terms of biological role, required for maturation of 30S ribosomal subunits. The sequence is that of Ribosome maturation factor RimP from Anaeromyxobacter dehalogenans (strain 2CP-C).